We begin with the raw amino-acid sequence, 239 residues long: Purine nucleoside phosphorylase DeoD-type (239 aa).

A purine D-ribonucleoside is bound at residue H5. Phosphate-binding positions include G21, R25, R44, and 88–91 (RVGS). Residues 180–182 (EME) and 204–205 (SD) each bind a purine D-ribonucleoside. D205 acts as the Proton donor in catalysis.

The protein belongs to the PNP/UDP phosphorylase family. In terms of assembly, homohexamer; trimer of homodimers.

It catalyses the reaction a purine D-ribonucleoside + phosphate = a purine nucleobase + alpha-D-ribose 1-phosphate. The catalysed reaction is a purine 2'-deoxy-D-ribonucleoside + phosphate = a purine nucleobase + 2-deoxy-alpha-D-ribose 1-phosphate. Functionally, catalyzes the reversible phosphorolytic breakdown of the N-glycosidic bond in the beta-(deoxy)ribonucleoside molecules, with the formation of the corresponding free purine bases and pentose-1-phosphate. This Citrobacter koseri (strain ATCC BAA-895 / CDC 4225-83 / SGSC4696) protein is Purine nucleoside phosphorylase DeoD-type.